Consider the following 2096-residue polypeptide: Tudor domain-containing protein 6 (2096 aa).

The 56-residue stretch at 65–120 folds into the Tudor 1 domain; it reads ASASPGELCLVQVGLLWHRCRVVSRQAQESRVFLLDEGRTITAGAGSLAPGRREFF. A disordered region spans residues 287–316; the sequence is YRGSTGTGDENSTSATWEEREESPDKPGSP. Residues 288–302 are compositionally biased toward polar residues; sequence RGSTGTGDENSTSAT. At Thr293 the chain carries Phosphothreonine. Tudor domains follow at residues 310–369, 536–593, 816–875, 1033–1088, 1352–1411, and 1567–1626; these read PDKP…YFRM, KPEP…FRQL, HQRN…FLKV, PLNP…AYDV, PLQR…NAIL, and CPYI…ELLS. Residues Ser1722 and Ser2062 each carry the phosphoserine modification. Residues 2026–2084 form the Tudor 8 domain; sequence AFTVGSKCVVWSSLRNTWSKCEILETAEEGTRVLNLSNGMEEIVNPENVWNGIPKLDKS.

Found in a mRNP complex (i.e. messenger ribonucleoproteins which correspond to mRNA with bound proteins), at least composed of TDRD1, TDRD6, TDRD7 and DDX4. Found in a complex, at least composed of PIWIL1, PIWIL2, DDX4 and TDRD6. Interacts with Tex19.1 and probably Tex19.2. Interacts with PRMT5. Interacts with SNRPB (when methylated); to trigger spliceosome formation. In terms of processing, undergoes proteolytic cleavage near the C-terminal by an unknown protease during the transition from meiosis I to meiosis II in primary spermatocytes.

Its subcellular location is the cytoplasm. Its function is as follows. Tudor domain-containing protein involved in germ cell development, more specifically the formation of chromatoid body (during spermiogenesis), Balbiani body (during oogenesis), germ plasm (upon fertilization), and for proper miRNA expression and spliceosome maturation. Essential for RNA-dependent helicase UPF1 localization to chromatoid body, for UPF1-UPF2 and UPF1-DDX4 interactions which are required for mRNA degradation, using the extended 3' UTR-triggered nonsense-mediated mRNA decay (NMD) pathway. Involved in spliceosome maturation and mRNA splicing in prophase I spermatocytes through interaction with arginine N-methyltransferase PRMT5 and symmetrically arginine dimethylated SNRPB (small nuclear ribonucleoprotein-associated protein). The chain is Tudor domain-containing protein 6 from Homo sapiens (Human).